Reading from the N-terminus, the 395-residue chain is Acetate kinase (395 aa).

Residue asparagine 7 coordinates Mg(2+). Lysine 14 provides a ligand contact to ATP. Position 88 (arginine 88) interacts with substrate. The active-site Proton donor/acceptor is the aspartate 145. ATP-binding positions include 205–209, 279–281, and 327–331; these read HLGNG, DFR, and GIGEN. Glutamate 381 lines the Mg(2+) pocket.

The protein belongs to the acetokinase family. As to quaternary structure, homodimer. Mg(2+) serves as cofactor. It depends on Mn(2+) as a cofactor.

The protein localises to the cytoplasm. It catalyses the reaction acetate + ATP = acetyl phosphate + ADP. Its pathway is metabolic intermediate biosynthesis; acetyl-CoA biosynthesis; acetyl-CoA from acetate: step 1/2. Its function is as follows. Catalyzes the formation of acetyl phosphate from acetate and ATP. Can also catalyze the reverse reaction. In Campylobacter jejuni subsp. jejuni serotype O:6 (strain 81116 / NCTC 11828), this protein is Acetate kinase.